The chain runs to 204 residues: Inositol diphosphatase DSP5 (204 aa).

The 150-residue stretch at 19–168 (NFSMVEDEIY…FDVLRLKQCL (150 aa)) folds into the Tyrosine-protein phosphatase domain. The WPD loop important for active site topology stretch occupies residues 75 to 87 (FGIEGKTDPPTPM). Cysteine 111 (phosphocysteine intermediate) is an active-site residue.

Belongs to the protein-tyrosine phosphatase family. Atypical dual-specificity phosphatase Siw14-like subfamily. As to expression, highly expressed in flowers. Expressed at low levels in roots, leaves, stems and siliques.

It carries out the reaction 5-diphospho-1D-myo-inositol 1,2,3,4,6-pentakisphosphate + H2O = 1D-myo-inositol hexakisphosphate + phosphate + H(+). The catalysed reaction is 1,5-bis(diphospho)-1D-myo-inositol 2,3,4,6-tetrakisphosphate + H2O = 1-diphospho-1D-myo-inositol 2,3,4,5,6-pentakisphosphate + phosphate + 2 H(+). It catalyses the reaction 3,5-bis(diphospho)-1D-myo-inositol 1,2,4,6-tetrakisphosphate + H2O = 3-diphospho-1D-myo-inositol 1,2,4,5,6-pentakisphosphate + phosphate + 2 H(+). The enzyme catalyses 6-diphospho-1D-myo-inositol pentakisphosphate + H2O = 1D-myo-inositol hexakisphosphate + phosphate + H(+). Its function is as follows. Cleaves the beta-phosphate at the 5-position of soluble inositol pyrophosphates. Has highest activity on 5-diphosphoinositol 1,2,3,4,6-pentakisphosphate (5-InsP(7)). Possesses low phosphotyrosine phosphatase activity in vitro. Dephosphorylates the phosphoinositides PI(3,5)P2. Hydrolyzes O-methylfluorescein phosphate in vitro. This is Inositol diphosphatase DSP5 from Arabidopsis thaliana (Mouse-ear cress).